Here is a 203-residue protein sequence, read N- to C-terminus: Guanylate kinase (203 aa).

In terms of domain architecture, Guanylate kinase-like spans 3–181 (GTLYIVAAPS…AVSEMCAIFT (179 aa)). Residue 10–17 (APSGAGKS) participates in ATP binding.

The protein belongs to the guanylate kinase family.

The protein localises to the cytoplasm. It catalyses the reaction GMP + ATP = GDP + ADP. Functionally, essential for recycling GMP and indirectly, cGMP. In Xanthomonas axonopodis pv. citri (strain 306), this protein is Guanylate kinase.